We begin with the raw amino-acid sequence, 273 residues long: NADPH-dependent 7-cyano-7-deazaguanine reductase (273 aa).

80–82 (VES) contacts substrate. 82-83 (SK) contacts NADPH. Cys-180 functions as the Thioimide intermediate in the catalytic mechanism. The active-site Proton donor is the Asp-187. 219–220 (HE) is a binding site for substrate. 248-249 (RG) contributes to the NADPH binding site.

The protein belongs to the GTP cyclohydrolase I family. QueF type 2 subfamily. In terms of assembly, homodimer.

Its subcellular location is the cytoplasm. It carries out the reaction 7-aminomethyl-7-carbaguanine + 2 NADP(+) = 7-cyano-7-deazaguanine + 2 NADPH + 3 H(+). It participates in tRNA modification; tRNA-queuosine biosynthesis. Catalyzes the NADPH-dependent reduction of 7-cyano-7-deazaguanine (preQ0) to 7-aminomethyl-7-deazaguanine (preQ1). The chain is NADPH-dependent 7-cyano-7-deazaguanine reductase from Bordetella pertussis (strain Tohama I / ATCC BAA-589 / NCTC 13251).